We begin with the raw amino-acid sequence, 1052 residues long: Calmin (1052 aa).

The actin-binding stretch occupies residues 1-288 (MAAQEWDWFQ…IVTYVAQFLE (288 aa)). A Calponin-homology (CH) 1 domain is found at 32–139 (NVQKRTFTRW…LIWNIILFFQ (108 aa)). A compositionally biased stretch (low complexity) spans 148–168 (SRSSPSSSLSPGSGGTDSDSS). The segment at 148–178 (SRSSPSSSLSPGSGGTDSDSSYPPTPTTERS) is disordered. Residues 187–291 (RKAIKTLLSW…YVAQFLERFP (105 aa)) enclose the Calponin-homology (CH) 2 domain. Disordered regions lie at residues 391 to 420 (STGKTGSIAEPTPESSILSTRKDGRRSNSL), 455 to 545 (KATK…TLLA), 585 to 727 (STSQ…SPPL), and 758 to 929 (GEDL…DSSI). Composition is skewed to basic and acidic residues over residues 455-465 (KATKELSKQDG) and 472-495 (VSKEKKKSEQEARLVLEAASDKVP). A compositionally biased stretch (polar residues) spans 509 to 529 (AQPSQDSSFCNGTVESPSSQG). S537 bears the Phosphoserine mark. Composition is skewed to basic and acidic residues over residues 594–614 (PSSHEKTRGEEEGSENHAEKP), 622–651 (PRAETEAAESRLEPKKLEPPPKDPEQEDQG), and 659–669 (PADKKPKVYEK). S679 carries the phosphoserine modification. At T710 the chain carries Phosphothreonine. Over residues 711-720 (LRSHSEEGLD) the composition is skewed to basic and acidic residues. At S724 the chain carries Phosphoserine. Basic and acidic residues predominate over residues 759–773 (EDLKSEDTDLEHPED). Acidic residues predominate over residues 780–791 (REEEADEDEEEA). Residues 792 to 801 (QSSQSSCSFS) show a composition bias toward low complexity. Residues 836-849 (SHEDHQPKETKENG) are compositionally biased toward basic and acidic residues. S856 carries the post-translational modification Phosphoserine. Basic residues predominate over residues 880-889 (SKKKEKRKHM). Phosphoserine is present on S925. A helical; Anchor for type IV membrane protein membrane pass occupies residues 1027–1047 (VIYFILFLWLLVYCLLLFPQL).

In terms of tissue distribution, expressed in testis. Expressed during testis maturation process and in maturing spermatids. In brain, it is expressed in neurons of the hippocampus, cerebral cortex, and thalamus, Purkinje cells, and also in the choroid plexus and ependymal cells. Expressed predominantly in dendrites and cell bodies of the neurons, but not in axons. The level of expression increases during the period of maturation of the mouse brain after birth.

It is found in the membrane. Its subcellular location is the cytoplasm. The chain is Calmin (Clmn) from Mus musculus (Mouse).